The following is a 528-amino-acid chain: Protein arginine N-methyltransferase 3 (528 aa).

The interval 1–42 is disordered; the sequence is MCSLAAGNGQGAELGPEPLELSDSGDDAGWEDEDADAEPAQG. N-acetylcysteine is present on C2. Phosphoserine is present on residues S22 and S24. The segment covering 23–37 has biased composition (acidic residues); sequence DSGDDAGWEDEDADA. A C2H2-type zinc finger spans residues 46 to 69; that stretch reads TPCLFCDRLFRSAEETFSHCKLEH. S169 bears the Phosphoserine mark. Residues 184-528 are mediates interaction with ALDH1A1; it reads MKQFAQDFVM…NSSTQTYSLQ (345 aa). Positions 214-528 constitute an SAM-dependent MTase PRMT-type domain; it reads DGVYFSSYGH…NSSTQTYSLQ (315 aa). R236, G260, D282, S284, I310, and E311 together coordinate S-adenosyl-L-homocysteine. Active-site residues include E326 and E335.

Belongs to the class I-like SAM-binding methyltransferase superfamily. Protein arginine N-methyltransferase family. As to quaternary structure, monomer and homodimer. Interacts with EPB41L3 (via FERM domain); the interaction is direct and inhibits the protein-arginine N-methyltransferase activity of PRMT3. Interacts with the 40S ribosomal protein RPS2. Interacts with ALDH1A1; the interaction is direct, inhibits ALDH1A1 aldehyde dehydrogenase activity and is independent of the methyltransferase activity of PRMT3. Ubiquitously expressed.

The protein localises to the cytoplasm. It is found in the cytosol. Its subcellular location is the nucleus. It catalyses the reaction L-arginyl-[protein] + S-adenosyl-L-methionine = N(omega)-methyl-L-arginyl-[protein] + S-adenosyl-L-homocysteine + H(+). It carries out the reaction L-arginyl-[protein] + 2 S-adenosyl-L-methionine = N(omega),N(omega)-dimethyl-L-arginyl-[protein] + 2 S-adenosyl-L-homocysteine + 2 H(+). Its activity is regulated as follows. Inhibited by N-ethylmaleimide and high concentrations of zinc chloride. Functionally, protein-arginine N-methyltransferase that catalyzes both the monomethylation and asymmetric dimethylation of the guanidino nitrogens of arginine residues in target proteins, and therefore falls into the group of type I methyltransferases. Catalyzes the asymmetric arginine dimethylation at multiple sites in the Arg/Gly-rich region of small ribosomal subunit protein uS5/RPS2. Also appears to methylate other ribosomal proteins. May regulate retinoic acid synthesis and signaling by inhibiting ALDH1A1 retinal dehydrogenase activity. Contributes to methylation of histone H4 'Arg-3', a specific tag for epigenetic transcriptional activation. Promotes osteogenesis. This Rattus norvegicus (Rat) protein is Protein arginine N-methyltransferase 3.